The following is a 379-amino-acid chain: Cytochrome b (379 aa).

Helical transmembrane passes span 33–53 (FGSL…FLAM), 77–98 (WLIR…SIHA), 113–133 (WNIG…GYVL), and 178–198 (FFAF…VHLL). The heme b site is built by His-83 and His-97. Residues His-182 and His-196 each contribute to the heme b site. His-201 serves as a coordination point for a ubiquinone. 4 helical membrane-spanning segments follow: residues 226–246 (IKDL…ALFF), 288–308 (LGGV…PLLN), 320–340 (ITQT…WIGG), and 347–367 (FTMI…ILMP).

Belongs to the cytochrome b family. The cytochrome bc1 complex contains 11 subunits: 3 respiratory subunits (MT-CYB, CYC1 and UQCRFS1), 2 core proteins (UQCRC1 and UQCRC2) and 6 low-molecular weight proteins (UQCRH/QCR6, UQCRB/QCR7, UQCRQ/QCR8, UQCR10/QCR9, UQCR11/QCR10 and a cleavage product of UQCRFS1). This cytochrome bc1 complex then forms a dimer. Heme b is required as a cofactor.

It localises to the mitochondrion inner membrane. Its function is as follows. Component of the ubiquinol-cytochrome c reductase complex (complex III or cytochrome b-c1 complex) that is part of the mitochondrial respiratory chain. The b-c1 complex mediates electron transfer from ubiquinol to cytochrome c. Contributes to the generation of a proton gradient across the mitochondrial membrane that is then used for ATP synthesis. This Thaptomys nigrita (Blackish grass mouse) protein is Cytochrome b (MT-CYB).